We begin with the raw amino-acid sequence, 325 residues long: Tetraacyldisaccharide 4'-kinase (325 aa).

55-62 (TAGGNGKT) provides a ligand contact to ATP.

It belongs to the LpxK family.

It catalyses the reaction a lipid A disaccharide + ATP = a lipid IVA + ADP + H(+). The protein operates within glycolipid biosynthesis; lipid IV(A) biosynthesis; lipid IV(A) from (3R)-3-hydroxytetradecanoyl-[acyl-carrier-protein] and UDP-N-acetyl-alpha-D-glucosamine: step 6/6. Transfers the gamma-phosphate of ATP to the 4'-position of a tetraacyldisaccharide 1-phosphate intermediate (termed DS-1-P) to form tetraacyldisaccharide 1,4'-bis-phosphate (lipid IVA). The sequence is that of Tetraacyldisaccharide 4'-kinase from Salmonella newport (strain SL254).